The primary structure comprises 364 residues: SVP1-like protein 2 (364 aa).

2 WD repeats span residues 173–213 (AHDS…KICE) and 218–257 (YQHT…NTIR).

Belongs to the WD repeat PROPPIN family.

Its subcellular location is the vacuole membrane. It localises to the cytoplasmic vesicle membrane. It is found in the preautophagosomal structure membrane. Its function is as follows. Involved in mitochondrial or peroxisomal functions and amino acid signaling pathways. The polypeptide is SVP1-like protein 2 (hsv2) (Schizosaccharomyces pombe (strain 972 / ATCC 24843) (Fission yeast)).